The primary structure comprises 781 residues: Acyl-CoA dehydrogenase family member 11 (781 aa).

Position 177 is an N6-acetyllysine (lysine 177). Tyrosine 325 carries the post-translational modification Phosphotyrosine. The residue at position 392 (lysine 392) is an N6-succinyllysine. FAD contacts are provided by residues 505–515 (FCMTEPDVASS), 513–515 (ASS), 539–541 (WSS), and serine 541. Residue serine 515 participates in substrate binding. Position 630–633 (630–633 (GPGR)) interacts with substrate. FAD contacts are provided by residues arginine 658, glutamine 728, and 728–732 (QVCGG). A substrate-binding site is contributed by glycine 756. Residues 757–759 (PDE) and glutamate 759 contribute to the FAD site.

Belongs to the acyl-CoA dehydrogenase family. Homodimer. Requires FAD as cofactor.

Its subcellular location is the peroxisome. The protein resides in the mitochondrion membrane. It catalyses the reaction a 2,3-saturated acyl-CoA + oxidized [electron-transfer flavoprotein] + H(+) = a (2E)-enoyl-CoA + reduced [electron-transfer flavoprotein]. The enzyme catalyses docosanoyl-CoA + oxidized [electron-transfer flavoprotein] + H(+) = (2E)-docosenoyl-CoA + reduced [electron-transfer flavoprotein]. The catalysed reaction is tetracosanoyl-CoA + oxidized [electron-transfer flavoprotein] + H(+) = (2E)-tetracosenoyl-CoA + reduced [electron-transfer flavoprotein]. It carries out the reaction eicosanoyl-CoA + oxidized [electron-transfer flavoprotein] + H(+) = (2E)-eicosenoyl-CoA + reduced [electron-transfer flavoprotein]. It catalyses the reaction hexacosanoyl-CoA + oxidized [electron-transfer flavoprotein] + H(+) = (2E)-hexacosenoyl-CoA + reduced [electron-transfer flavoprotein]. The enzyme catalyses tricosanoyl-CoA + oxidized [electron-transfer flavoprotein] + H(+) = (2E)-tricosenoyl-CoA + reduced [electron-transfer flavoprotein]. Its pathway is lipid metabolism; fatty acid beta-oxidation. Acyl-CoA dehydrogenase, that exhibits maximal activity towards saturated C22-CoA. Probably participates in beta-oxydation and energy production but could also play a role in the metabolism of specific fatty acids to control fatty acids composition of cellular lipids in brain. This Pongo abelii (Sumatran orangutan) protein is Acyl-CoA dehydrogenase family member 11 (ACAD11).